Reading from the N-terminus, the 616-residue chain is Dihydroxy-acid dehydratase (616 aa).

D81 serves as a coordination point for Mg(2+). Residue C122 coordinates [2Fe-2S] cluster. Residues D123 and K124 each contribute to the Mg(2+) site. K124 carries the post-translational modification N6-carboxylysine. C195 contributes to the [2Fe-2S] cluster binding site. Residue E491 participates in Mg(2+) binding. The active-site Proton acceptor is S517.

This sequence belongs to the IlvD/Edd family. Homodimer. [2Fe-2S] cluster is required as a cofactor. The cofactor is Mg(2+).

It carries out the reaction (2R)-2,3-dihydroxy-3-methylbutanoate = 3-methyl-2-oxobutanoate + H2O. The catalysed reaction is (2R,3R)-2,3-dihydroxy-3-methylpentanoate = (S)-3-methyl-2-oxopentanoate + H2O. It participates in amino-acid biosynthesis; L-isoleucine biosynthesis; L-isoleucine from 2-oxobutanoate: step 3/4. The protein operates within amino-acid biosynthesis; L-valine biosynthesis; L-valine from pyruvate: step 3/4. Functionally, functions in the biosynthesis of branched-chain amino acids. Catalyzes the dehydration of (2R,3R)-2,3-dihydroxy-3-methylpentanoate (2,3-dihydroxy-3-methylvalerate) into 2-oxo-3-methylpentanoate (2-oxo-3-methylvalerate) and of (2R)-2,3-dihydroxy-3-methylbutanoate (2,3-dihydroxyisovalerate) into 2-oxo-3-methylbutanoate (2-oxoisovalerate), the penultimate precursor to L-isoleucine and L-valine, respectively. The chain is Dihydroxy-acid dehydratase from Serratia proteamaculans (strain 568).